A 292-amino-acid polypeptide reads, in one-letter code: MKNKIKYVYSDLDGTIVSWNPKNQFTHQGKTYKNLHEVSHATVTAFKQLQAQGIKIGIVTGRDYCRVRWLEKYLNTDLPTITLDGAIIYFRDEIIRQEVLDKEFIHGINQIVKRYPTAAFKLNMGWGNYYTCNPSLIFEGDHAYREHFNADSKFYRKEIDNTVDWDINNMKVNQVYFDTFTCPEPMIQELDNLVEKSDVTAKSYRHSLYIIKKGVSKASALQNLQRDFLVEMKPANTIVFGDGDNDIEMMQWADHSVSLTGSDPECYKLAKYHTDSVDDDGIAKWINKNLLC.

The active-site Nucleophile is the aspartate 11. Position 11 (aspartate 11) interacts with Mg(2+). Leucine 12 serves as a coordination point for phosphate. Aspartate 13 lines the Mg(2+) pocket. Phosphate-binding positions include 60-61 (TG) and lysine 217. Aspartate 242 is a Mg(2+) binding site. Asparagine 245 lines the phosphate pocket.

Belongs to the HAD-like hydrolase superfamily. Cof family. Mg(2+) serves as cofactor.

The protein is Putative phosphatase MPN_381 of Mycoplasma pneumoniae (strain ATCC 29342 / M129 / Subtype 1) (Mycoplasmoides pneumoniae).